Here is a 1268-residue protein sequence, read N- to C-terminus: Vigilin (1268 aa).

Serine 2 bears the N-acetylserine mark. The residue at position 8 (threonine 8) is a Phosphothreonine. Phosphoserine is present on residues serine 11, serine 31, and serine 35. KH domains are found at residues 158 to 229, 230 to 302, 303 to 371, 372 to 442, 443 to 514, 515 to 588, 589 to 660, 661 to 734, 735 to 807, 808 to 880, 881 to 979, 980 to 1059, 1060 to 1134, and 1135 to 1209; these read PKEH…RLEV, EKAF…AVEV, KKSQ…SVAA, PSWL…EINI, DHKF…DLII, EQRF…SVPI, FKQF…EVSI, PAKL…DIRA, KPEY…SMLV, DPKH…ECAI, PQKF…EVEV, PFDL…SVTV, DPKY…DVPL, and DHRV…ALQV. Threonine 295 and threonine 296 each carry phosphothreonine. Serine 317 carries the phosphoserine modification. A Phosphotyrosine modification is found at tyrosine 437. A Phosphoserine modification is found at serine 645. Positions 914–944 are disordered; it reads ENAVHSTEPVVQENGDEAGEGREAKDCDPGS. A compositionally biased stretch (basic and acidic residues) spans 932 to 944; that stretch reads GEGREAKDCDPGS. Position 991 is an N6-acetyllysine (lysine 991). Positions 1233-1268 are disordered; the sequence is WTASSSEKAPDMSSSEEFPSFGAQVAPKTLPWGPKR. The span at 1234 to 1249 shows a compositional bias: polar residues; sequence TASSSEKAPDMSSSEE. Phosphoserine is present on residues serine 1247 and serine 1252.

Its subcellular location is the cytoplasm. It localises to the nucleus. Its function is as follows. Appears to play a role in cell sterol metabolism. It may function to protect cells from over-accumulation of cholesterol. This chain is Vigilin (HDLBP), found in Homo sapiens (Human).